The chain runs to 101 residues: MAKKSMIAREVKRAETAKKFAAKRAELKAIIASASSSEEQIWEAQTKLQQLPRDASPSRQRNRCRVTGRPHGVYRKFGLCRHKLREAAMRGDVPGLVKASW.

This sequence belongs to the universal ribosomal protein uS14 family. Part of the 30S ribosomal subunit. Contacts proteins S3 and S10.

Binds 16S rRNA, required for the assembly of 30S particles and may also be responsible for determining the conformation of the 16S rRNA at the A site. This Cellvibrio japonicus (strain Ueda107) (Pseudomonas fluorescens subsp. cellulosa) protein is Small ribosomal subunit protein uS14.